We begin with the raw amino-acid sequence, 75 residues long: Large ribosomal subunit protein bL28 (75 aa).

The segment at 1 to 21 (MARVCQVTGKRPMSGNKRSHA) is disordered.

Belongs to the bacterial ribosomal protein bL28 family.

The chain is Large ribosomal subunit protein bL28 from Blochmanniella pennsylvanica (strain BPEN).